We begin with the raw amino-acid sequence, 343 residues long: S-adenosylmethionine:tRNA ribosyltransferase-isomerase (343 aa).

It belongs to the QueA family. In terms of assembly, monomer.

It is found in the cytoplasm. It carries out the reaction 7-aminomethyl-7-carbaguanosine(34) in tRNA + S-adenosyl-L-methionine = epoxyqueuosine(34) in tRNA + adenine + L-methionine + 2 H(+). It participates in tRNA modification; tRNA-queuosine biosynthesis. In terms of biological role, transfers and isomerizes the ribose moiety from AdoMet to the 7-aminomethyl group of 7-deazaguanine (preQ1-tRNA) to give epoxyqueuosine (oQ-tRNA). The chain is S-adenosylmethionine:tRNA ribosyltransferase-isomerase from Coxiella burnetii (strain CbuG_Q212) (Coxiella burnetii (strain Q212)).